A 691-amino-acid chain; its full sequence is DNA ligase (691 aa).

Residues 41 to 45, 90 to 91, and Glu130 contribute to the NAD(+) site; these read DAEYD and SL. The active-site N6-AMP-lysine intermediate is the Lys132. Residues Arg153, Glu190, Lys307, and Lys331 each coordinate NAD(+). Cys425, Cys428, Cys443, and Cys449 together coordinate Zn(2+). One can recognise a BRCT domain in the interval 610–691; the sequence is APQGVLAGKT…LHQLLEGNTP (82 aa).

Belongs to the NAD-dependent DNA ligase family. LigA subfamily. It depends on Mg(2+) as a cofactor. Mn(2+) is required as a cofactor.

It carries out the reaction NAD(+) + (deoxyribonucleotide)n-3'-hydroxyl + 5'-phospho-(deoxyribonucleotide)m = (deoxyribonucleotide)n+m + AMP + beta-nicotinamide D-nucleotide.. Its function is as follows. DNA ligase that catalyzes the formation of phosphodiester linkages between 5'-phosphoryl and 3'-hydroxyl groups in double-stranded DNA using NAD as a coenzyme and as the energy source for the reaction. It is essential for DNA replication and repair of damaged DNA. The protein is DNA ligase of Burkholderia cenocepacia (strain HI2424).